Here is a 463-residue protein sequence, read N- to C-terminus: V-type ATP synthase beta chain (463 aa).

Belongs to the ATPase alpha/beta chains family.

Its function is as follows. Produces ATP from ADP in the presence of a proton gradient across the membrane. The V-type beta chain is a regulatory subunit. This Halothermothrix orenii (strain H 168 / OCM 544 / DSM 9562) protein is V-type ATP synthase beta chain.